An 87-amino-acid polypeptide reads, in one-letter code: Small ribosomal subunit protein uS15 (87 aa).

The protein belongs to the universal ribosomal protein uS15 family. Part of the 30S ribosomal subunit. Forms a bridge to the 50S subunit in the 70S ribosome, contacting the 23S rRNA.

Functionally, one of the primary rRNA binding proteins, it binds directly to 16S rRNA where it helps nucleate assembly of the platform of the 30S subunit by binding and bridging several RNA helices of the 16S rRNA. Forms an intersubunit bridge (bridge B4) with the 23S rRNA of the 50S subunit in the ribosome. This chain is Small ribosomal subunit protein uS15, found in Alkaliphilus oremlandii (strain OhILAs) (Clostridium oremlandii (strain OhILAs)).